The following is a 520-amino-acid chain: DDB1- and CUL4-associated factor 17 (520 aa).

Helical transmembrane passes span 186 to 206 and 222 to 242; these read VLLY…ILEI and GILI…QTIA.

Interacts with DDB1, CUL4A and CUL4B. In terms of tissue distribution, ubiquitously expressed.

The protein localises to the membrane. The protein resides in the nucleus. It localises to the nucleolus. Its pathway is protein modification; protein ubiquitination. Its function is as follows. May function as a substrate receptor for CUL4-DDB1 E3 ubiquitin-protein ligase complex. The polypeptide is DDB1- and CUL4-associated factor 17 (DCAF17) (Homo sapiens (Human)).